The following is a 148-amino-acid chain: MQNRPKSVLTPARLGTSGVVRNTLEDPWVRFQIELEFVQSLGNPDYLTFLAQQGCFDKPEFINYLSYLQYWKSPSYSRFITYPFCLHMLDLLQSPDFRREVAHESVTRFIDDQMLLHWKNYLRKRAEMVNKHVQSLDAMATPGPGPSS.

Belongs to the Mediator complex subunit 31 family. Component of the Mediator complex.

It is found in the nucleus. Functionally, component of the Mediator complex, a coactivator involved in the regulated transcription of nearly all RNA polymerase II-dependent genes. Mediator functions as a bridge to convey information from gene-specific regulatory proteins to the basal RNA polymerase II transcription machinery. Mediator is recruited to promoters by direct interactions with regulatory proteins and serves as a scaffold for the assembly of a functional preinitiation complex with RNA polymerase II and the general transcription factors. The chain is Mediator of RNA polymerase II transcription subunit 31 from Taenia solium (Pork tapeworm).